The primary structure comprises 147 residues: MKLVVQRVTEASVTVEGAVAGRIGPGIMALVGITHEDTEEDAAYLADKIVNLRIFDDESGKMNLSLLDTGGEILSVSQFTLYGETKKGRRPNFMNAAKPDQAVLLYEKWNELLREKGVKVETGIFGAMMDVQLTNSGPITLIMDSKQ.

The Gly-cisPro motif, important for rejection of L-amino acids signature appears at 137 to 138 (GP).

Belongs to the DTD family. Homodimer.

The protein resides in the cytoplasm. It carries out the reaction glycyl-tRNA(Ala) + H2O = tRNA(Ala) + glycine + H(+). The catalysed reaction is a D-aminoacyl-tRNA + H2O = a tRNA + a D-alpha-amino acid + H(+). Functionally, an aminoacyl-tRNA editing enzyme that deacylates mischarged D-aminoacyl-tRNAs. Also deacylates mischarged glycyl-tRNA(Ala), protecting cells against glycine mischarging by AlaRS. Acts via tRNA-based rather than protein-based catalysis; rejects L-amino acids rather than detecting D-amino acids in the active site. By recycling D-aminoacyl-tRNA to D-amino acids and free tRNA molecules, this enzyme counteracts the toxicity associated with the formation of D-aminoacyl-tRNA entities in vivo and helps enforce protein L-homochirality. The chain is D-aminoacyl-tRNA deacylase from Bacillus velezensis (strain DSM 23117 / BGSC 10A6 / LMG 26770 / FZB42) (Bacillus amyloliquefaciens subsp. plantarum).